The chain runs to 365 residues: DNA replication and repair protein RecF (365 aa).

30–37 (GRNAQGKT) provides a ligand contact to ATP.

Belongs to the RecF family.

It localises to the cytoplasm. Functionally, the RecF protein is involved in DNA metabolism; it is required for DNA replication and normal SOS inducibility. RecF binds preferentially to single-stranded, linear DNA. It also seems to bind ATP. In Streptococcus pneumoniae (strain CGSP14), this protein is DNA replication and repair protein RecF.